Consider the following 181-residue polypeptide: 3-hydroxyanthranilate 3,4-dioxygenase (181 aa).

Arginine 46 lines the O2 pocket. Fe cation is bound by residues histidine 50, glutamate 56, and histidine 95. Residue glutamate 56 coordinates substrate. Substrate is bound by residues arginine 99 and glutamate 109.

Belongs to the 3-HAO family. The cofactor is Fe(2+).

It localises to the cytoplasm. It carries out the reaction 3-hydroxyanthranilate + O2 = (2Z,4Z)-2-amino-3-carboxymuconate 6-semialdehyde. It participates in cofactor biosynthesis; NAD(+) biosynthesis; quinolinate from L-kynurenine: step 3/3. Catalyzes the oxidative ring opening of 3-hydroxyanthranilate to 2-amino-3-carboxymuconate semialdehyde, which spontaneously cyclizes to quinolinate. The protein is 3-hydroxyanthranilate 3,4-dioxygenase of Mycosarcoma maydis (Corn smut fungus).